Here is a 309-residue protein sequence, read N- to C-terminus: L-arabinose 1-dehydrogenase (NAD(P)(+)) (309 aa).

Residues Ile15 and 37–38 (SR) contribute to the NADP(+) site. Residue Lys91 is the Proton donor of the active site. An NADP(+)-binding site is contributed by Asp169.

The protein belongs to the Gfo/Idh/MocA family. Monomer.

It catalyses the reaction alpha-L-arabinopyanose + NAD(+) = L-arabinono-1,4-lactone + NADH + H(+). It carries out the reaction alpha-L-arabinopyanose + NADP(+) = L-arabinono-1,4-lactone + NADPH + H(+). The catalysed reaction is D-galactose + NAD(+) = D-galactono-1,4-lactone + NADH + H(+). The enzyme catalyses D-galactose + NADP(+) = D-galactono-1,5-lactone + NADPH + H(+). Its pathway is carbohydrate degradation; L-arabinose degradation via L-arabinono-1,4-lactone pathway. Its function is as follows. Catalyzes the NAD(P)(+)-dependent conversion of L-arabinose to L-arabino-gamma-lactone. Is involved in a degradation pathway of L-arabinose that allows A.brasilense to grow on L-arabinose as a sole carbon source. Prefers NADP(+) to NAD(+) as electron acceptor. Displays high catalytic efficiency for both L-arabinose and D-galactose in vitro. However, the enzyme appears to be involved in the metabolism of L-arabinose but not D-galactose in vivo. To a lesser extent, is also active on D-talose and D-xylose as substrates in vitro, but not with D-arabinose, D-glucose, D-ribose, L-xylose, L-mannose, L-lyxose, and D-fructose. The chain is L-arabinose 1-dehydrogenase (NAD(P)(+)) (araA) from Azospirillum brasilense.